The primary structure comprises 1957 residues: [F-actin]-monooxygenase MICAL2 (1957 aa).

The tract at residues 2 to 494 (GENEDEKQAQ…KHLYITKELE (493 aa)) is monooxygenase domain. Residues Cys-97, 116-118 (EKR), 123-125 (RNN), Phe-183, Tyr-298, and Asp-398 each bind FAD. The Calponin-homology (CH) domain occupies 516 to 619 (DIRPSKLLTW…MVMYLSKFYE (104 aa)). Ser-631 bears the Phosphoserine mark. A Nuclear localization signal motif is present at residues 660 to 681 (RKRTPRVDGQTGENDMNKRRRK). Disordered stretches follow at residues 660-714 (RKRT…NQNK) and 886-942 (QNKL…HPSH). A compositionally biased stretch (polar residues) spans 687–714 (DEPSNFSSRSLGSNQECGSSKEGGNQNK). A compositionally biased stretch (pro residues) spans 899–910 (PPSPPSRLPSPD). Residues 911–925 (PAASSSPSTVDSASP) show a composition bias toward low complexity. The LIM zinc-binding domain occupies 1000–1062 (DTCYFCKKRV…KPHFIHCKTN (63 aa)). Cys-1002, Cys-1005, His-1023, Cys-1026, Cys-1029, Cys-1032, Cys-1052, and His-1055 together coordinate Zn(2+). Disordered stretches follow at residues 1070 to 1143 (AELK…PSEW), 1168 to 1243 (SEDS…TPSK), 1258 to 1345 (VNKR…LYLP), 1361 to 1431 (GEDG…EGGP), 1467 to 1626 (KAGE…SPPC), and 1675 to 1779 (ESRQ…KEKK). Residues 1185–1195 (SHTEPCEEKPW) are compositionally biased toward basic and acidic residues. The span at 1232-1243 (RANSFQSPTPSK) shows a compositional bias: polar residues. Positions 1275–1294 (LPSSSSHSSSPPSSSSTSVS) are enriched in low complexity. A compositionally biased stretch (polar residues) spans 1302-1316 (SPPQMTASEPLSQVS). Residues 1324 to 1363 (TPNFRRRAVAQGAPREIPLYLPHHPKPEWAEYCLVSPGED) form an interaction with MAPK1 region. 2 stretches are compositionally biased toward basic and acidic residues: residues 1388 to 1402 (SNHR…KDRS) and 1413 to 1431 (GEDR…EGGP). Residues 1485 to 1496 (VLKPVRPLLLPR) show a composition bias toward low complexity. Over residues 1552 to 1562 (GGKKAWAKQES) the composition is skewed to basic and acidic residues. Residues 1570 to 1579 (CTRSFSLRKT) show a composition bias toward polar residues. Phosphoserine is present on Ser-1688. The span at 1718-1733 (APPPPPPPPPPPPPPT) shows a compositional bias: pro residues. The span at 1751 to 1762 (ASSSASSTSSSS) shows a compositional bias: low complexity. The bMERB domain occupies 1796 to 1945 (KQEELKRLYK…EKAEDQHFES (150 aa)).

It belongs to the Mical family. As to quaternary structure, interacts with PLXNA4. Interacts with RAB1B. Interacts with MAPK1/ERK2. Interacts with RAB35, RAB8A, RAB10, RAB13 and RAB15 (in their GTP-bound forms); binding to RAB35 is of low affinity compared to other Rab proteins; at least in case of RAB8A may bind 2 molecules of RAB8A simultaneously through a high and a low affinity binding site, respectively. May interact with MAPK1/ERK2. Interacts with CORO1C; this interaction recruits MICAL2 to the actin filaments. The cofactor is FAD.

It is found in the nucleus. The protein resides in the cytoplasm. The enzyme catalyses L-methionyl-[F-actin] + NADPH + O2 + H(+) = L-methionyl-(R)-S-oxide-[F-actin] + NADP(+) + H2O. Specifically inhibited by CCG-1423, a small molecule inhibitor of SRF:MKL1/MRTF-A-dependent transcription. Its function is as follows. Methionine monooxygenase that promotes depolymerization of F-actin by mediating oxidation of residues 'Met-44' and 'Met-47' on actin to form methionine-sulfoxide, resulting in actin filament disassembly and preventing repolymerization. Regulates the disassembly of branched actin networks also by oxidizing ARP3B-containing ARP2/3 complexes leading to ARP3B dissociation from the network. Acts as a key regulator of the SRF signaling pathway elicited by nerve growth factor and serum: mediates oxidation and subsequent depolymerization of nuclear actin, leading to increase MKL1/MRTF-A presence in the nucleus and promote SRF:MKL1/MRTF-A-dependent gene transcription. Does not activate SRF:MKL1/MRTF-A through RhoA. This chain is [F-actin]-monooxygenase MICAL2, found in Homo sapiens (Human).